The primary structure comprises 216 residues: Nicotinamidase (216 aa).

The active site involves aspartate 8. Aspartate 51, histidine 53, and histidine 94 together coordinate Zn(2+). The active site involves lysine 122. Cysteine 167 functions as the Nucleophile in the catalytic mechanism.

The protein belongs to the isochorismatase family.

The protein resides in the cytoplasm. Its subcellular location is the nucleus. It is found in the peroxisome. It carries out the reaction nicotinamide + H2O = nicotinate + NH4(+). The protein operates within cofactor biosynthesis; nicotinate biosynthesis; nicotinate from nicotinamide: step 1/1. With respect to regulation, inhibited by N-ethylmaleimide, HgCl(2) and PCMB. Competitively inhibited by NAD, NMN and 3-acetylpyridine. In terms of biological role, catalyzes the deamidation of nicotinamide, an early step in the NAD(+) salvage pathway. Positively regulates SIR2-mediated silencing and longevity by preventing the accumulation of intracellular nicotinamide, an inhibitor of SIR2, during times of stress. Also acts on nicotinyl hydroxamate. The chain is Nicotinamidase (PNC1) from Saccharomyces cerevisiae (strain ATCC 204508 / S288c) (Baker's yeast).